The following is a 172-amino-acid chain: Probable metallophosphoesterase MTH_1774 (172 aa).

A divalent metal cation contacts are provided by D8, H10, D37, N59, H85, H113, and H115.

Belongs to the metallophosphoesterase superfamily. YfcE family. The cofactor is a divalent metal cation.

This is Probable metallophosphoesterase MTH_1774 from Methanothermobacter thermautotrophicus (strain ATCC 29096 / DSM 1053 / JCM 10044 / NBRC 100330 / Delta H) (Methanobacterium thermoautotrophicum).